Reading from the N-terminus, the 121-residue chain is MARIAGVDIPREKRIVISLTYVYGIGTTTANKIAEEANVSPETRVKDLTDDELGRIREIVDNYKVEGDLRREQNLNIKRLMEISSYRGIRHRRGLPVRGQKTKNNARTRKGPVKTVANKKK.

The interval 91–121 (HRRGLPVRGQKTKNNARTRKGPVKTVANKKK) is disordered.

Belongs to the universal ribosomal protein uS13 family. Part of the 30S ribosomal subunit. Forms a loose heterodimer with protein S19. Forms two bridges to the 50S subunit in the 70S ribosome.

Its function is as follows. Located at the top of the head of the 30S subunit, it contacts several helices of the 16S rRNA. In the 70S ribosome it contacts the 23S rRNA (bridge B1a) and protein L5 of the 50S subunit (bridge B1b), connecting the 2 subunits; these bridges are implicated in subunit movement. Contacts the tRNAs in the A and P-sites. The polypeptide is Small ribosomal subunit protein uS13 (Staphylococcus saprophyticus subsp. saprophyticus (strain ATCC 15305 / DSM 20229 / NCIMB 8711 / NCTC 7292 / S-41)).